The primary structure comprises 601 residues: Glutamine--fructose-6-phosphate aminotransferase [isomerizing] (601 aa).

Catalysis depends on C2, which acts as the Nucleophile; for GATase activity. The Glutamine amidotransferase type-2 domain maps to 2–216; sequence CGIVGYIGTN…DKEIVIVTKD (215 aa). SIS domains lie at 282–421 and 453–591; these read ILDE…EIGD and IAGE…VDKP. Residue K596 is the For Fru-6P isomerization activity of the active site.

In terms of assembly, homodimer.

It localises to the cytoplasm. The enzyme catalyses D-fructose 6-phosphate + L-glutamine = D-glucosamine 6-phosphate + L-glutamate. In terms of biological role, catalyzes the first step in hexosamine metabolism, converting fructose-6P into glucosamine-6P using glutamine as a nitrogen source. The protein is Glutamine--fructose-6-phosphate aminotransferase [isomerizing] of Listeria innocua serovar 6a (strain ATCC BAA-680 / CLIP 11262).